Here is a 203-residue protein sequence, read N- to C-terminus: Recombination protein RecR (203 aa).

The segment at 56–71 adopts a C4-type zinc-finger fold; that stretch reads CEVCGNVSDADRCRIC. Residues 79–179 form the Toprim domain; it reads SLVCVVEEPK…TVTRIASGLP (101 aa).

This sequence belongs to the RecR family.

May play a role in DNA repair. It seems to be involved in an RecBC-independent recombinational process of DNA repair. It may act with RecF and RecO. In Mycobacterium sp. (strain JLS), this protein is Recombination protein RecR.